Consider the following 467-residue polypeptide: Glutamyl-tRNA reductase (467 aa).

Substrate is bound by residues 49–52, S109, 114–116, and Q120; these read TCNR and EQQ. C50 serves as the catalytic Nucleophile. An NADP(+)-binding site is contributed by 189 to 194; that stretch reads GAGAMG. The tract at residues 446–467 is disordered; the sequence is GFSDTTRYGTSPAQSSSKYHAE. Residues 447 to 467 show a composition bias toward polar residues; the sequence is FSDTTRYGTSPAQSSSKYHAE.

The protein belongs to the glutamyl-tRNA reductase family. As to quaternary structure, homodimer.

It carries out the reaction (S)-4-amino-5-oxopentanoate + tRNA(Glu) + NADP(+) = L-glutamyl-tRNA(Glu) + NADPH + H(+). The protein operates within porphyrin-containing compound metabolism; protoporphyrin-IX biosynthesis; 5-aminolevulinate from L-glutamyl-tRNA(Glu): step 1/2. In terms of biological role, catalyzes the NADPH-dependent reduction of glutamyl-tRNA(Glu) to glutamate 1-semialdehyde (GSA). The chain is Glutamyl-tRNA reductase from Mycobacterium leprae (strain TN).